The sequence spans 464 residues: Fumarate hydratase class II (464 aa).

Substrate is bound by residues 98 to 100 (SGT), 129 to 132 (HPND), 139 to 141 (SSN), and Thr187. The active-site Proton donor/acceptor is the His188. Ser318 is a catalytic residue. Residues Ser319 and 324–326 (KVN) each bind substrate.

This sequence belongs to the class-II fumarase/aspartase family. Fumarase subfamily. Homotetramer.

Its subcellular location is the cytoplasm. It carries out the reaction (S)-malate = fumarate + H2O. Its pathway is carbohydrate metabolism; tricarboxylic acid cycle; (S)-malate from fumarate: step 1/1. Involved in the TCA cycle. Catalyzes the stereospecific interconversion of fumarate to L-malate. This is Fumarate hydratase class II from Haemophilus ducreyi (strain 35000HP / ATCC 700724).